A 297-amino-acid polypeptide reads, in one-letter code: Tyrosine recombinase XerD (297 aa).

The Core-binding (CB) domain occupies 1 to 87 (MLEYAIEDFF…SIRSFHQFLI (87 aa)). Residues 108–291 (KLPDILSQDE…TKARLKDMYQ (184 aa)) enclose the Tyr recombinase domain. Catalysis depends on residues Arg147, Lys171, His243, Arg246, and His269. The active-site O-(3'-phospho-DNA)-tyrosine intermediate is Tyr278.

It belongs to the 'phage' integrase family. XerD subfamily. In terms of assembly, forms a cyclic heterotetrameric complex composed of two molecules of XerC and two molecules of XerD.

It localises to the cytoplasm. In terms of biological role, site-specific tyrosine recombinase, which acts by catalyzing the cutting and rejoining of the recombining DNA molecules. The XerC-XerD complex is essential to convert dimers of the bacterial chromosome into monomers to permit their segregation at cell division. It also contributes to the segregational stability of plasmids. The chain is Tyrosine recombinase XerD from Oceanobacillus iheyensis (strain DSM 14371 / CIP 107618 / JCM 11309 / KCTC 3954 / HTE831).